The chain runs to 142 residues: Holo-[acyl-carrier-protein] synthase (142 aa).

2 residues coordinate Mg(2+): aspartate 9 and glutamate 63.

This sequence belongs to the P-Pant transferase superfamily. AcpS family. Requires Mg(2+) as cofactor.

It is found in the cytoplasm. The catalysed reaction is apo-[ACP] + CoA = holo-[ACP] + adenosine 3',5'-bisphosphate + H(+). Its function is as follows. Transfers the 4'-phosphopantetheine moiety from coenzyme A to a Ser of acyl-carrier-protein. This chain is Holo-[acyl-carrier-protein] synthase, found in Burkholderia lata (strain ATCC 17760 / DSM 23089 / LMG 22485 / NCIMB 9086 / R18194 / 383).